We begin with the raw amino-acid sequence, 24 residues long: ALKCQGWVDYCNGNVECCNECVMY.

An intrachain disulfide couples cysteine 4 to cysteine 18.

The protein belongs to the neurotoxin 02 (plectoxin) family. 02 (plectoxin) subfamily. Contains 5 disulfide bonds. In terms of tissue distribution, expressed by the venom gland.

Its subcellular location is the secreted. Its function is as follows. Potent toxin that may paralyze and/or kill insect pests such as H.virescens (lepidoptera), S.exigua (beet armyworm) and M.sexta (tobacco hornworm). The sequence is that of U1-plectoxin-Pt1e from Plectreurys tristis (Spider).